A 497-amino-acid polypeptide reads, in one-letter code: Glutamyl-tRNA(Gln) amidotransferase subunit A (497 aa).

Residues Lys91 and Ser166 each act as charge relay system in the active site. The disordered stretch occupies residues 143–171 (SSTENSAYGPTHNPWDLERTAGGSGGGSS). Ser190 (acyl-ester intermediate) is an active-site residue.

This sequence belongs to the amidase family. GatA subfamily. As to quaternary structure, heterotrimer of A, B and C subunits.

It catalyses the reaction L-glutamyl-tRNA(Gln) + L-glutamine + ATP + H2O = L-glutaminyl-tRNA(Gln) + L-glutamate + ADP + phosphate + H(+). Allows the formation of correctly charged Gln-tRNA(Gln) through the transamidation of misacylated Glu-tRNA(Gln) in organisms which lack glutaminyl-tRNA synthetase. The reaction takes place in the presence of glutamine and ATP through an activated gamma-phospho-Glu-tRNA(Gln). The sequence is that of Glutamyl-tRNA(Gln) amidotransferase subunit A from Corynebacterium glutamicum (strain ATCC 13032 / DSM 20300 / JCM 1318 / BCRC 11384 / CCUG 27702 / LMG 3730 / NBRC 12168 / NCIMB 10025 / NRRL B-2784 / 534).